Reading from the N-terminus, the 180-residue chain is Ferric nitrobindin-like protein (180 aa).

The GXWXGXG signature appears at 21 to 27; the sequence is GRWEGAG.

This sequence belongs to the nitrobindin family.

This is Ferric nitrobindin-like protein from Kineococcus radiotolerans (strain ATCC BAA-149 / DSM 14245 / SRS30216).